The sequence spans 276 residues: Large ribosomal subunit protein uL2 (276 aa).

The disordered stretch occupies residues 224–258 (VAMNPVDHPHGGGEGRTGEGRVPVSPWGTPTKGYR). The span at 230–242 (DHPHGGGEGRTGE) shows a compositional bias: basic and acidic residues.

The protein belongs to the universal ribosomal protein uL2 family. As to quaternary structure, part of the 50S ribosomal subunit. Forms a bridge to the 30S subunit in the 70S ribosome.

One of the primary rRNA binding proteins. Required for association of the 30S and 50S subunits to form the 70S ribosome, for tRNA binding and peptide bond formation. It has been suggested to have peptidyltransferase activity; this is somewhat controversial. Makes several contacts with the 16S rRNA in the 70S ribosome. The protein is Large ribosomal subunit protein uL2 of Polynucleobacter necessarius subsp. necessarius (strain STIR1).